Consider the following 869-residue polypeptide: Protein translocase subunit SecA (869 aa).

ATP-binding positions include glutamine 85, 103–107 (GEGKT), and aspartate 508.

This sequence belongs to the SecA family. In terms of assembly, monomer and homodimer. Part of the essential Sec protein translocation apparatus which comprises SecA, SecYEG and auxiliary proteins SecDF. Other proteins may also be involved.

It localises to the cell membrane. Its subcellular location is the cytoplasm. It catalyses the reaction ATP + H2O + cellular proteinSide 1 = ADP + phosphate + cellular proteinSide 2.. Part of the Sec protein translocase complex. Interacts with the SecYEG preprotein conducting channel. Has a central role in coupling the hydrolysis of ATP to the transfer of proteins into and across the cell membrane, serving as an ATP-driven molecular motor driving the stepwise translocation of polypeptide chains across the membrane. The chain is Protein translocase subunit SecA from Deinococcus deserti (strain DSM 17065 / CIP 109153 / LMG 22923 / VCD115).